The primary structure comprises 679 residues: Protein asunder (679 aa).

A coiled-coil region spans residues 519-541; it reads RLKVNKTKDQYRLFYRELEQLIQ. The tract at residues 564–610 is disordered; the sequence is GDASNKSDPSAAHLRSYTESPLSPERLEPTNSVNSSSSSILKASKRR. A Nuclear localization signal (NLS) motif is present at residues 604 to 610; the sequence is LKASKRR.

The protein belongs to the Integrator subunit 13 family. In terms of assembly, belongs to the multiprotein complex Integrator, at least composed of IntS1, IntS2, IntS3, IntS4, omd/IntS5, IntS6, defl/IntS7, IntS8, IntS9, IntS10, IntS11, IntS12, asun/IntS13, IntS14 and IntS15. The core complex associates with protein phosphatase 2A subunits mts/PP2A and Pp2A-29B, to form the Integrator-PP2A (INTAC) complex. In terms of processing, phosphorylated.

The protein resides in the nucleus. It is found in the cytoplasm. The protein localises to the perinuclear region. In terms of biological role, component of the integrator complex, a multiprotein complex that terminates RNA polymerase II (Pol II) transcription in the promoter-proximal region of genes. The integrator complex provides a quality checkpoint during transcription elongation by driving premature transcription termination of transcripts that are unfavorably configured for transcriptional elongation: the complex terminates transcription by (1) catalyzing dephosphorylation of the C-terminal domain (CTD) of Pol II subunit Polr2A/Rbp1 and Spt5, and (2) degrading the exiting nascent RNA transcript via endonuclease activity. The integrator complex is also involved in the 3'-end processing of the U7 snRNA, and also the spliceosomal snRNAs U1, U2, U4 and U5. The chain is Protein asunder (asun) from Drosophila mojavensis (Fruit fly).